The sequence spans 1064 residues: Carbamoyl phosphate synthase large chain (1064 aa).

The carboxyphosphate synthetic domain stretch occupies residues 1 to 401 (MPKRNDIKKI…SLLKAVRSLE (401 aa)). Residues Arg129, Arg169, Gly175, Gly176, Glu208, Ile210, Glu215, Gly241, Val242, His243, Gln284, and Glu298 each contribute to the ATP site. The ATP-grasp 1 domain maps to 133–327 (KELCERIGEP…IAKMSAKIAI (195 aa)). Mg(2+)-binding residues include Gln284, Glu298, and Asn300. Residues Gln284, Glu298, and Asn300 each contribute to the Mn(2+) site. The tract at residues 402–546 (IGVFHNDLQE…YSTYEWENES (145 aa)) is oligomerization domain. The segment at 547-929 (KRSSKEKIIV…ALYKSFEAAK (383 aa)) is carbamoyl phosphate synthetic domain. In terms of domain architecture, ATP-grasp 2 spans 671–861 (EKALQDLEIP…MAQLATQMIL (191 aa)). Residues Arg707, Ser746, Leu748, Glu752, Gly777, Val778, His779, Ser780, Gln820, and Glu832 each coordinate ATP. The Mg(2+) site is built by Gln820, Glu832, and Asn834. Mn(2+) contacts are provided by Gln820, Glu832, and Asn834. The MGS-like domain occupies 930 to 1064 (LHMADYGSVL…QSRSFTTKNI (135 aa)). The interval 930–1064 (LHMADYGSVL…QSRSFTTKNI (135 aa)) is allosteric domain.

It belongs to the CarB family. Composed of two chains; the small (or glutamine) chain promotes the hydrolysis of glutamine to ammonia, which is used by the large (or ammonia) chain to synthesize carbamoyl phosphate. Tetramer of heterodimers (alpha,beta)4. Mg(2+) is required as a cofactor. The cofactor is Mn(2+).

It catalyses the reaction hydrogencarbonate + L-glutamine + 2 ATP + H2O = carbamoyl phosphate + L-glutamate + 2 ADP + phosphate + 2 H(+). The catalysed reaction is hydrogencarbonate + NH4(+) + 2 ATP = carbamoyl phosphate + 2 ADP + phosphate + 2 H(+). It participates in amino-acid biosynthesis; L-arginine biosynthesis; carbamoyl phosphate from bicarbonate: step 1/1. Its pathway is pyrimidine metabolism; UMP biosynthesis via de novo pathway; (S)-dihydroorotate from bicarbonate: step 1/3. In terms of biological role, large subunit of the glutamine-dependent carbamoyl phosphate synthetase (CPSase). CPSase catalyzes the formation of carbamoyl phosphate from the ammonia moiety of glutamine, carbonate, and phosphate donated by ATP, constituting the first step of 2 biosynthetic pathways, one leading to arginine and/or urea and the other to pyrimidine nucleotides. The large subunit (synthetase) binds the substrates ammonia (free or transferred from glutamine from the small subunit), hydrogencarbonate and ATP and carries out an ATP-coupled ligase reaction, activating hydrogencarbonate by forming carboxy phosphate which reacts with ammonia to form carbamoyl phosphate. This is Carbamoyl phosphate synthase large chain from Lactococcus lactis subsp. lactis (strain IL1403) (Streptococcus lactis).